Here is a 172-residue protein sequence, read N- to C-terminus: Translation initiation factor IF-3 (172 aa).

It belongs to the IF-3 family. Monomer.

It localises to the cytoplasm. Its function is as follows. IF-3 binds to the 30S ribosomal subunit and shifts the equilibrium between 70S ribosomes and their 50S and 30S subunits in favor of the free subunits, thus enhancing the availability of 30S subunits on which protein synthesis initiation begins. The protein is Translation initiation factor IF-3 of Campylobacter jejuni subsp. jejuni serotype O:6 (strain 81116 / NCTC 11828).